A 359-amino-acid chain; its full sequence is Aminomethyltransferase (359 aa).

It belongs to the GcvT family. As to quaternary structure, the glycine cleavage system is composed of four proteins: P, T, L and H.

It catalyses the reaction N(6)-[(R)-S(8)-aminomethyldihydrolipoyl]-L-lysyl-[protein] + (6S)-5,6,7,8-tetrahydrofolate = N(6)-[(R)-dihydrolipoyl]-L-lysyl-[protein] + (6R)-5,10-methylene-5,6,7,8-tetrahydrofolate + NH4(+). Its function is as follows. The glycine cleavage system catalyzes the degradation of glycine. In Alcanivorax borkumensis (strain ATCC 700651 / DSM 11573 / NCIMB 13689 / SK2), this protein is Aminomethyltransferase.